We begin with the raw amino-acid sequence, 437 residues long: Sorting nexin-30 (437 aa).

2 disordered regions span residues 1 to 44 and 54 to 73; these read MAGG…PDLL and LILPNGGTPAGTSSPASSSS. T38 is modified (phosphothreonine). Position 40 is a phosphoserine (S40). The span at 63 to 73 shows a compositional bias: low complexity; it reads AGTSSPASSSS. The PX domain occupies 89–210; it reads RDLFVIVDDP…IFLTAKDLNA (122 aa). R132, Q134, K162, and R176 together coordinate a 1,2-diacyl-sn-glycero-3-phospho-(1D-myo-inositol-3-phosphate). One can recognise a BAR domain in the interval 234-437; the sequence is KLRTRPLEFA…PLLQEKQEAK (204 aa).

The protein belongs to the sorting nexin family. In terms of assembly, heterodimer; heterodimerizes with SNX4.

Its subcellular location is the early endosome membrane. Its function is as follows. Involved in the regulation of endocytosis and in several stages of intracellular trafficking. Together with SNX4, involved in autophagosome assembly. The protein is Sorting nexin-30 of Homo sapiens (Human).